The sequence spans 147 residues: Nucleoside diphosphate kinase (147 aa).

ATP contacts are provided by lysine 9, arginine 85, threonine 91, arginine 102, and asparagine 112. Histidine 115 (pros-phosphohistidine intermediate) is an active-site residue.

The protein belongs to the NDK family. The cofactor is Mg(2+).

The enzyme catalyses a 2'-deoxyribonucleoside 5'-diphosphate + ATP = a 2'-deoxyribonucleoside 5'-triphosphate + ADP. It catalyses the reaction a ribonucleoside 5'-diphosphate + ATP = a ribonucleoside 5'-triphosphate + ADP. Its function is as follows. Major role in the synthesis of nucleoside triphosphates other than ATP. The ATP gamma phosphate is transferred to the NDP beta phosphate via a ping-pong mechanism, using a phosphorylated active-site intermediate. This chain is Nucleoside diphosphate kinase (NDK1), found in Encephalitozoon cuniculi (strain GB-M1) (Microsporidian parasite).